Here is a 593-residue protein sequence, read N- to C-terminus: Proteasome-associated ATPase (593 aa).

Residues 5-94 are a coiled coil; sequence DDADSRAARW…KEEIDRLAQP (90 aa). ATP is bound at residue 281–286; the sequence is GCGKTL. The interval 574–593 is disordered; the sequence is GKGADAGRSIETASNTGQYL. Positions 584–593 are enriched in polar residues; sequence ETASNTGQYL. The docks into pockets in the proteasome alpha-ring stretch occupies residues 592-593; sequence YL.

Belongs to the AAA ATPase family. Homohexamer. Assembles into a hexameric ring structure that caps the 20S proteasome core. Strongly interacts with the prokaryotic ubiquitin-like protein Pup through a hydrophobic interface; the interacting region of ARC lies in its N-terminal coiled-coil domain. There is one Pup binding site per ARC hexamer ring. Upon ATP-binding, the C-terminus of ARC interacts with the alpha-rings of the proteasome core, possibly by binding to the intersubunit pockets.

Its pathway is protein degradation; proteasomal Pup-dependent pathway. In terms of biological role, ATPase which is responsible for recognizing, binding, unfolding and translocation of pupylated proteins into the bacterial 20S proteasome core particle. May be essential for opening the gate of the 20S proteasome via an interaction with its C-terminus, thereby allowing substrate entry and access to the site of proteolysis. Thus, the C-termini of the proteasomal ATPase may function like a 'key in a lock' to induce gate opening and therefore regulate proteolysis. In Salinispora arenicola (strain CNS-205), this protein is Proteasome-associated ATPase.